The chain runs to 175 residues: Large ribosomal subunit protein uL10 (175 aa).

The protein belongs to the universal ribosomal protein uL10 family. Part of the ribosomal stalk of the 50S ribosomal subunit. The N-terminus interacts with L11 and the large rRNA to form the base of the stalk. The C-terminus forms an elongated spine to which L12 dimers bind in a sequential fashion forming a multimeric L10(L12)X complex.

Functionally, forms part of the ribosomal stalk, playing a central role in the interaction of the ribosome with GTP-bound translation factors. This chain is Large ribosomal subunit protein uL10, found in Halorhodospira halophila (strain DSM 244 / SL1) (Ectothiorhodospira halophila (strain DSM 244 / SL1)).